A 172-amino-acid chain; its full sequence is 3-hydroxydecanoyl-[acyl-carrier-protein] dehydratase (172 aa).

His-71 is an active-site residue.

The protein belongs to the thioester dehydratase family. FabA subfamily. Homodimer.

It localises to the cytoplasm. It carries out the reaction a (3R)-hydroxyacyl-[ACP] = a (2E)-enoyl-[ACP] + H2O. The enzyme catalyses (3R)-hydroxydecanoyl-[ACP] = (2E)-decenoyl-[ACP] + H2O. It catalyses the reaction (2E)-decenoyl-[ACP] = (3Z)-decenoyl-[ACP]. Its pathway is lipid metabolism; fatty acid biosynthesis. Necessary for the introduction of cis unsaturation into fatty acids. Catalyzes the dehydration of (3R)-3-hydroxydecanoyl-ACP to E-(2)-decenoyl-ACP and then its isomerization to Z-(3)-decenoyl-ACP. Can catalyze the dehydratase reaction for beta-hydroxyacyl-ACPs with saturated chain lengths up to 16:0, being most active on intermediate chain length. The polypeptide is 3-hydroxydecanoyl-[acyl-carrier-protein] dehydratase (Pectobacterium carotovorum subsp. carotovorum (strain PC1)).